The chain runs to 715 residues: Polyribonucleotide nucleotidyltransferase (715 aa).

Positions 491 and 497 each coordinate Mg(2+). Residues 558–617 (PKIMTMTINPEKIRDVIGPQGRVINKIIEETGVKIDIEQDGRVFIASINHEANLRAKQII) form the KH domain. The S1 motif domain maps to 627 to 695 (GQVYLGTVKR…DQGRVNLSRK (69 aa)).

Belongs to the polyribonucleotide nucleotidyltransferase family. The cofactor is Mg(2+).

It is found in the cytoplasm. It carries out the reaction RNA(n+1) + phosphate = RNA(n) + a ribonucleoside 5'-diphosphate. Involved in mRNA degradation. Catalyzes the phosphorolysis of single-stranded polyribonucleotides processively in the 3'- to 5'-direction. This is Polyribonucleotide nucleotidyltransferase from Brevibacillus brevis (strain 47 / JCM 6285 / NBRC 100599).